A 355-amino-acid polypeptide reads, in one-letter code: Protein RecA (355 aa).

69 to 76 (GPESSGKT) is a binding site for ATP. The segment at 329–355 (AYGLPDREETKREETAQIPDTEKTKDV) is disordered.

Belongs to the RecA family.

It is found in the cytoplasm. Functionally, can catalyze the hydrolysis of ATP in the presence of single-stranded DNA, the ATP-dependent uptake of single-stranded DNA by duplex DNA, and the ATP-dependent hybridization of homologous single-stranded DNAs. It interacts with LexA causing its activation and leading to its autocatalytic cleavage. The polypeptide is Protein RecA (Desulfotalea psychrophila (strain LSv54 / DSM 12343)).